Here is a 335-residue protein sequence, read N- to C-terminus: Heme A synthase (335 aa).

Transmembrane regions (helical) follow at residues 9-29, 90-110, 120-140, 156-176, 197-217, 255-275, 283-303, and 309-329; these read VAIW…IGGF, YVHR…FIYF, VVIR…TGWY, MLTL…YQFF, VGII…VAGL, VQFI…VLTI, VYVM…TLLL, and IAIS…CFLC. Residue His-259 coordinates heme. Position 313 (His-313) interacts with heme.

It belongs to the COX15/CtaA family. Type 2 subfamily. In terms of assembly, interacts with CtaB. It depends on heme b as a cofactor.

The protein localises to the cell membrane. The enzyme catalyses Fe(II)-heme o + 2 A + H2O = Fe(II)-heme a + 2 AH2. It participates in porphyrin-containing compound metabolism; heme A biosynthesis; heme A from heme O: step 1/1. Functionally, catalyzes the conversion of heme O to heme A by two successive hydroxylations of the methyl group at C8. The first hydroxylation forms heme I, the second hydroxylation results in an unstable dihydroxymethyl group, which spontaneously dehydrates, resulting in the formyl group of heme A. The sequence is that of Heme A synthase from Wolbachia sp. subsp. Brugia malayi (strain TRS).